The sequence spans 472 residues: Chromosomal replication initiator protein DnaA (472 aa).

The tract at residues 1 to 73 (MSNMEHDRWS…LTCWQAEMPE (73 aa)) is domain I, interacts with DnaA modulators. Residues 73-128 (EVCRIDLTVRSPMRAAVTKEAPAPAEHRRDEHRPAADARSHAAAPAPSNHDALGGS) are domain II. The interval 89-127 (VTKEAPAPAEHRRDEHRPAADARSHAAAPAPSNHDALGG) is disordered. The segment covering 97–112 (AEHRRDEHRPAADARS) has biased composition (basic and acidic residues). Over residues 113–124 (HAAAPAPSNHDA) the composition is skewed to low complexity. Residues 129-351 (PLDPRLTFAS…GAINRLLAHS (223 aa)) form a domain III, AAA+ region region. ATP is bound by residues glycine 176, glycine 178, lysine 179, and threonine 180. Positions 352–472 (KLNAQPVTLE…VESLKRQLQE (121 aa)) are domain IV, binds dsDNA.

Belongs to the DnaA family. As to quaternary structure, oligomerizes as a right-handed, spiral filament on DNA at oriC.

The protein localises to the cytoplasm. Plays an essential role in the initiation and regulation of chromosomal replication. ATP-DnaA binds to the origin of replication (oriC) to initiate formation of the DNA replication initiation complex once per cell cycle. Binds the DnaA box (a 9 base pair repeat at the origin) and separates the double-stranded (ds)DNA. Forms a right-handed helical filament on oriC DNA; dsDNA binds to the exterior of the filament while single-stranded (ss)DNA is stabiized in the filament's interior. The ATP-DnaA-oriC complex binds and stabilizes one strand of the AT-rich DNA unwinding element (DUE), permitting loading of DNA polymerase. After initiation quickly degrades to an ADP-DnaA complex that is not apt for DNA replication. Binds acidic phospholipids. The chain is Chromosomal replication initiator protein DnaA from Rhodopseudomonas palustris (strain BisB5).